Consider the following 824-residue polypeptide: RelA-associated inhibitor (824 aa).

Met1 is modified (N-acetylmethionine). 2 disordered regions span residues 48 to 87 (SLWS…SPQK) and 99 to 271 (RSES…YERL). Phosphoserine occurs at positions 84, 100, 102, 110, 113, 119, and 120. Thr123 bears the Phosphothreonine mark. A Phosphoserine modification is found at Ser134. Omega-N-methylarginine occurs at positions 137, 142, 144, 160, 167, and 180. Phosphoserine is present on residues Ser183, Ser187, and Ser203. At Arg205 the chain carries Omega-N-methylarginine. A Phosphothreonine modification is found at Thr275. Ser279 is modified (phosphoserine). Disordered stretches follow at residues 291 to 370 (SLDG…RPIP) and 388 to 501 (RAVL…QTVP). At Thr307 the chain carries Phosphothreonine. A phosphoserine mark is found at Ser315, Ser331, and Ser338. Residue Thr340 is modified to Phosphothreonine. Residues 359–370 (QPRSTPRQRPIP) show a composition bias toward low complexity. A compositionally biased stretch (pro residues) spans 400-424 (APPPKLPPQPPPQPQMQPQPQPQPQ). Over residues 425 to 440 (MQPQSQAQPQTPAPQQ) the composition is skewed to low complexity. A phosphoserine mark is found at Ser522, Ser563, and Ser593. The tract at residues 547-614 (FHRHGGPGPG…SVLRKVGSPR (68 aa)) is disordered. Over residues 575-597 (PPAPAPPAPIPPPAPPQSSPPEQ) the composition is skewed to pro residues. ANK repeat units lie at residues 655 to 684 (EGIT…NVNS) and 688 to 717 (HGWT…AIFA). The SH3 domain maps to 754–816 (MHNGVVYALW…PRNYFGLFPR (63 aa)).

Belongs to the iASPP family. In terms of assembly, interacts with TP63 and TP73. Interacts with RELA NF-kappa-B subunit and with SP1 via its C-terminal part. Interacts (via SH3 domain and ANK repeats) with p53/TP53; the interaction inhibits pro-apoptotic activity of p53/TP53. In terms of tissue distribution, most abundant in skin with high levels also found in heart, testis and stomach. In 15.5 dpc embryonic heart, expressed at higher levels in atria than ventricles.

The protein localises to the cytoplasm. Its subcellular location is the nucleus. In terms of biological role, regulator that plays a central role in regulation of apoptosis and transcription via its interaction with NF-kappa-B and p53/TP53 proteins. Inhibits p53/TP53 function, possibly by preventing the association between p53/TP53 and ASPP1 or ASPP2, and therefore suppressing the subsequent activation of apoptosis. Is involved in NF-kappa-B dependent negative regulation of inflammatory response. This Mus musculus (Mouse) protein is RelA-associated inhibitor.